A 116-amino-acid polypeptide reads, in one-letter code: Large ribosomal subunit protein uL18 (116 aa).

This sequence belongs to the universal ribosomal protein uL18 family. In terms of assembly, part of the 50S ribosomal subunit; part of the 5S rRNA/L5/L18/L25 subcomplex. Contacts the 5S and 23S rRNAs.

Functionally, this is one of the proteins that bind and probably mediate the attachment of the 5S RNA into the large ribosomal subunit, where it forms part of the central protuberance. The protein is Large ribosomal subunit protein uL18 of Pseudomonas entomophila (strain L48).